We begin with the raw amino-acid sequence, 194 residues long: Imidazoleglycerol-phosphate dehydratase (194 aa).

Belongs to the imidazoleglycerol-phosphate dehydratase family.

The protein localises to the cytoplasm. It carries out the reaction D-erythro-1-(imidazol-4-yl)glycerol 3-phosphate = 3-(imidazol-4-yl)-2-oxopropyl phosphate + H2O. The protein operates within amino-acid biosynthesis; L-histidine biosynthesis; L-histidine from 5-phospho-alpha-D-ribose 1-diphosphate: step 6/9. The protein is Imidazoleglycerol-phosphate dehydratase of Halalkalibacterium halodurans (strain ATCC BAA-125 / DSM 18197 / FERM 7344 / JCM 9153 / C-125) (Bacillus halodurans).